The chain runs to 121 residues: Aspartate 1-decarboxylase (121 aa).

The Schiff-base intermediate with substrate; via pyruvic acid role is filled by serine 25. A Pyruvic acid (Ser) modification is found at serine 25. Threonine 57 lines the substrate pocket. The active-site Proton donor is the tyrosine 58. 73–75 contributes to the substrate binding site; sequence GAA.

It belongs to the PanD family. In terms of assembly, heterooctamer of four alpha and four beta subunits. Requires pyruvate as cofactor. Post-translationally, is synthesized initially as an inactive proenzyme, which is activated by self-cleavage at a specific serine bond to produce a beta-subunit with a hydroxyl group at its C-terminus and an alpha-subunit with a pyruvoyl group at its N-terminus.

It localises to the cytoplasm. It catalyses the reaction L-aspartate + H(+) = beta-alanine + CO2. It participates in cofactor biosynthesis; (R)-pantothenate biosynthesis; beta-alanine from L-aspartate: step 1/1. Catalyzes the pyruvoyl-dependent decarboxylation of aspartate to produce beta-alanine. This Wolinella succinogenes (strain ATCC 29543 / DSM 1740 / CCUG 13145 / JCM 31913 / LMG 7466 / NCTC 11488 / FDC 602W) (Vibrio succinogenes) protein is Aspartate 1-decarboxylase.